The sequence spans 246 residues: Probable transcriptional regulatory protein PM0980 (246 aa).

Belongs to the TACO1 family.

Its subcellular location is the cytoplasm. The chain is Probable transcriptional regulatory protein PM0980 from Pasteurella multocida (strain Pm70).